The chain runs to 206 residues: Thymidylate kinase (206 aa).

Residue 11–18 coordinates ATP; it reads GIDGAGKT.

Belongs to the thymidylate kinase family.

The catalysed reaction is dTMP + ATP = dTDP + ADP. Phosphorylation of dTMP to form dTDP in both de novo and salvage pathways of dTTP synthesis. The chain is Thymidylate kinase from Paraburkholderia xenovorans (strain LB400).